The primary structure comprises 448 residues: Vimentin (448 aa).

The segment at Pro-1–Glu-77 is head. Residue Ser-9 is modified to Phosphoserine. The O-linked (GlcNAc) threonine glycan is linked to Thr-16. Ser-17 is modified (phosphoserine; by PKC; alternate). Ser-17 carries O-linked (GlcNAc) serine; alternate glycosylation. Phosphoserine; by CaMK2, PKA, PKC and ROCK2 is present on Ser-22. Phosphoserine occurs at positions 29, 31, and 33. The residue at position 35 (Tyr-35) is a Phosphotyrosine. Residue Ser-37 is modified to Phosphoserine. Ser-38 is modified (phosphoserine; by CDK5 and CDK1). Tyr-43 bears the Phosphotyrosine mark. Residue Ser-48 is modified to Phosphoserine; by PKA and PKC. Ser-54 is modified (phosphoserine; by AURKB and ROCK2). Ser-55 carries the post-translational modification Phosphoserine. Ser-65 carries the post-translational modification Phosphoserine; by CaMK2. Residue Ser-69 is modified to Phosphoserine. Residues Phe-78–Leu-113 are coil 1A. The stretch at Phe-78–Leu-113 forms a coiled coil. The IF rod domain occupies Glu-85 to Ile-393. Residue Lys-86 forms a Glycyl lysine isopeptide (Lys-Gly) (interchain with G-Cter in SUMO2) linkage. Tyr-99 carries the phosphotyrosine modification. Residues Lys-102, Lys-111, and Lys-121 each carry the N6-acetyllysine; alternate modification. 2 positions are modified to N6-succinyllysine; alternate: Lys-102 and Lys-111. Glycyl lysine isopeptide (Lys-Gly) (interchain with G-Cter in SUMO2); alternate cross-links involve residues Lys-102, Lys-111, and Lys-121. The interval Leu-114–Glu-135 is linker 1. At Ser-126 the chain carries Phosphoserine. A coiled-coil region spans residues Met-136–Leu-227. Residues Met-136–Leu-227 form a coil 1B region. Lys-150 bears the N6-acetyllysine mark. Residue Lys-170 is modified to N6-acetyllysine; alternate. Lys-170 is subject to N6-succinyllysine; alternate. Ser-196 is modified (phosphoserine). Lys-205 is modified (N6-acetyllysine; alternate). Lys-205 is covalently cross-linked (Glycyl lysine isopeptide (Lys-Gly) (interchain with G-Cter in SUMO2); alternate). The residue at position 208 (Ser-208) is a Phosphoserine. Lys-217 carries the post-translational modification N6-acetyllysine. The tract at residues Gln-228–Ala-250 is linker 12. Residue Lys-244 forms a Glycyl lysine isopeptide (Lys-Gly) (interchain with G-Cter in SUMO2) linkage. The coil 2 stretch occupies residues Leu-251 to Glu-389. Lys-276 is modified (N6-acetyllysine; alternate). The residue at position 276 (Lys-276) is an N6-succinyllysine; alternate. Lys-276 is covalently cross-linked (Glycyl lysine isopeptide (Lys-Gly) (interchain with G-Cter in SUMO2); alternate). Ser-281 bears the Phosphoserine mark. The stretch at Asn-285–Glu-389 forms a coiled coil. Residue Lys-295 forms a Glycyl lysine isopeptide (Lys-Gly) (interchain with G-Cter in SUMO2) linkage. Ser-307 carries the post-translational modification Phosphoserine. Positions Leu-308–Glu-311 match the [IL]-x-C-x-x-[DE] motif motif. Lys-355 bears the N6-acetyllysine; alternate mark. A Glycyl lysine isopeptide (Lys-Gly) (interchain with G-Cter in SUMO2); alternate cross-link involves residue Lys-355. The segment at Glu-390–Glu-448 is tail. 4 positions are modified to phosphoserine: Ser-391, Ser-394, Ser-401, and Ser-402. Thr-408 is modified (phosphothreonine). Ser-412 is modified (phosphoserine). A Phosphothreonine modification is found at Thr-418. A Phosphoserine modification is found at Ser-420. Residue Lys-421 forms a Glycyl lysine isopeptide (Lys-Gly) (interchain with G-Cter in SUMO2) linkage. Lys-427 carries the post-translational modification N6-acetyllysine; alternate. Lys-427 bears the N6-succinyllysine; alternate mark. Lys-427 is covalently cross-linked (Glycyl lysine isopeptide (Lys-Gly) (interchain with G-Cter in SUMO2); alternate). Lys-427 is covalently cross-linked (Glycyl lysine isopeptide (Lys-Gly) (interchain with G-Cter in SUMO1); alternate). Thr-428 and Thr-440 each carry phosphothreonine. Ser-441 carries the phosphoserine modification.

The protein belongs to the intermediate filament family. As to quaternary structure, homomer assembled from elementary dimers. Identified in complexes that contain VIM, EZR, AHNAK, BFSP1, BFSP2, ANK2, PLEC, PRX and spectrin. Interacts with BCAS3. Interacts with LGSN. Interacts with SYNM. Interacts (via rod region) with PLEC (via CH 1 domain). Interacts with STK33. Interacts with LARP6. Interacts with RAB8B. Interacts with TOR1A; the interaction associates TOR1A with the cytoskeleton. Interacts with TOR1AIP1. Interacts with TOR1AIP1. Interacts with DIAPH1. Interacts with EPPK1; interaction is dependent of higher-order structure of intermediate filament. Interacts with the non-receptor tyrosine kinase SRMS; the interaction leads to phosphorylation of VIM. Interacts with NOD2. Interacts (via head region) with CORO1C. Interacts with HDGF. Interacts with PRKCE (via phorbol-ester/DAG-type 2 domain). Interacts with BFSP2. Interacts with PPL. Interacts with PKP1 and PKP2. Interacts with SCRIB (via PDZ domains); the interaction protects SCRIB from proteasomal degradation and facilitates SCRIB localization to intermediate filaments, the interaction is reduced by cell contact inhibition. In terms of processing, one of the most prominent phosphoproteins in various cells of mesenchymal origin. Phosphorylation is enhanced during cell division, at which time vimentin filaments are significantly reorganized. Phosphorylation by PKN1 inhibits the formation of filaments. Filament disassembly during mitosis is promoted by phosphorylation at Ser-37 as well as by nestin. Phosphorylated at Ser-38 by CDK5 during neutrophil secretion in the cytoplasm. Phosphorylated by STK33. Phosphorylated on tyrosine residues by SRMS. S-nitrosylation is induced by interferon-gamma and oxidatively-modified low-densitity lipoprotein (LDL(ox)) possibly implicating the iNOS-S100A8/9 transnitrosylase complex.

Its subcellular location is the cytoplasm. The protein resides in the cytoskeleton. The protein localises to the nucleus matrix. It localises to the cell membrane. Its function is as follows. Vimentins are class-III intermediate filaments found in various non-epithelial cells, especially mesenchymal cells. Vimentin is attached to the nucleus, endoplasmic reticulum, and mitochondria, either laterally or terminally. Plays a role in cell directional movement, orientation, cell sheet organization and Golgi complex polarization at the cell migration front. Protects SCRIB from proteasomal degradation and facilitates its localization to intermediate filaments in a cell contact-mediated manner. Functionally, involved with LARP6 in the stabilization of type I collagen mRNAs for CO1A1 and CO1A2. The chain is Vimentin (VIM) from Cricetulus griseus (Chinese hamster).